We begin with the raw amino-acid sequence, 229 residues long: Cytochrome c oxidase subunit 2 (229 aa).

The Mitochondrial intermembrane portion of the chain corresponds to 1 to 26 (MSTWANLGLQDSASPLMEQLIFFHDH). The helical transmembrane segment at 27 to 48 (ALLILVMITVLVGYLMFMLFFN) threads the bilayer. Over 49–62 (SYVNRFLLHGQLIE) the chain is Mitochondrial matrix. A helical transmembrane segment spans residues 63 to 82 (MIWTILPAIILLFIAMPSLR). Over 83–229 (LLYLLDEINE…IKWISNSVNS (147 aa)) the chain is Mitochondrial intermembrane. Cu cation-binding residues include histidine 161, cysteine 196, glutamate 198, cysteine 200, histidine 204, and methionine 207. Glutamate 198 serves as a coordination point for Mg(2+).

It belongs to the cytochrome c oxidase subunit 2 family. In terms of assembly, component of the cytochrome c oxidase (complex IV, CIV), a multisubunit enzyme composed of a catalytic core of 3 subunits and several supernumerary subunits. The complex exists as a monomer or a dimer and forms supercomplexes (SCs) in the inner mitochondrial membrane with ubiquinol-cytochrome c oxidoreductase (cytochrome b-c1 complex, complex III, CIII). Requires Cu cation as cofactor.

It localises to the mitochondrion inner membrane. The catalysed reaction is 4 Fe(II)-[cytochrome c] + O2 + 8 H(+)(in) = 4 Fe(III)-[cytochrome c] + 2 H2O + 4 H(+)(out). Component of the cytochrome c oxidase, the last enzyme in the mitochondrial electron transport chain which drives oxidative phosphorylation. The respiratory chain contains 3 multisubunit complexes succinate dehydrogenase (complex II, CII), ubiquinol-cytochrome c oxidoreductase (cytochrome b-c1 complex, complex III, CIII) and cytochrome c oxidase (complex IV, CIV), that cooperate to transfer electrons derived from NADH and succinate to molecular oxygen, creating an electrochemical gradient over the inner membrane that drives transmembrane transport and the ATP synthase. Cytochrome c oxidase is the component of the respiratory chain that catalyzes the reduction of oxygen to water. Electrons originating from reduced cytochrome c in the intermembrane space (IMS) are transferred via the dinuclear copper A center (CU(A)) of subunit 2 and heme A of subunit 1 to the active site in subunit 1, a binuclear center (BNC) formed by heme A3 and copper B (CU(B)). The BNC reduces molecular oxygen to 2 water molecules using 4 electrons from cytochrome c in the IMS and 4 protons from the mitochondrial matrix. This Drosophila miranda (Fruit fly) protein is Cytochrome c oxidase subunit 2 (mt:CoII).